The primary structure comprises 330 residues: DNA-directed RNA polymerase subunit alpha (330 aa).

Residues M1–S225 form an alpha N-terminal domain (alpha-NTD) region. The tract at residues V237–D330 is alpha C-terminal domain (alpha-CTD).

Belongs to the RNA polymerase alpha chain family. In terms of assembly, homodimer. The RNAP catalytic core consists of 2 alpha, 1 beta, 1 beta' and 1 omega subunit. When a sigma factor is associated with the core the holoenzyme is formed, which can initiate transcription.

It catalyses the reaction RNA(n) + a ribonucleoside 5'-triphosphate = RNA(n+1) + diphosphate. Functionally, DNA-dependent RNA polymerase catalyzes the transcription of DNA into RNA using the four ribonucleoside triphosphates as substrates. This is DNA-directed RNA polymerase subunit alpha from Dehalococcoides mccartyi (strain CBDB1).